Reading from the N-terminus, the 317-residue chain is Heme A synthase (317 aa).

The Cytoplasmic segment spans residues 1–6 (MQRSLK). A helical transmembrane segment spans residues 7–27 (WFASTTTVAMLFVLIGGALVT). The Extracellular portion of the chain corresponds to 28 to 54 (KTDSGMGCGRSWPLCHGQWIPDDITPQ). C35 and C42 are oxidised to a cystine. A helical membrane pass occupies residues 55 to 75 (LVIELSHRLVSGLAAIMVLIL). Residue E58 is part of the active site. Position 61 (H61) interacts with heme o. The Cytoplasmic portion of the chain corresponds to 76-91 (CIRSWRVMGHVRETKP). A helical membrane pass occupies residues 92–112 (LAVLSFVFLVLQSLIGAAAVV). Topologically, residues 113-123 (WGQSDFVMALH) are extracellular. Residue H123 participates in heme o binding. The helical transmembrane segment at 124–144 (FGISLISFAAVLLLTLLIFVV) threads the bilayer. The Cytoplasmic segment spans residues 145-159 (DKKFSPTSLQLDGQM). Residues 160 to 180 (RFHIYGIIIYSYLVVYTGALV) form a helical membrane-spanning segment. Residues 181 to 214 (RHTNASLACPSWPLCAKSRLLPVQFHEWVQMGHR) are Extracellular-facing. C189 and C195 are oxidised to a cystine. H213 contributes to the heme b binding site. The chain crosses the membrane as a helical span at residues 215 to 235 (LAAAVIIIWIAVATVHAARYY). Over 236 to 243 (REQPVIYY) the chain is Cytoplasmic. The helical transmembrane segment at 244–264 (GWIISLLLVLAQMVTGALVVF) threads the bilayer. At 265 to 272 (TELNLYIS) the chain is on the extracellular side. Residues 273 to 293 (LAHAFFISCLFGVLSYLLLLA) traverse the membrane as a helical segment. Residue H275 coordinates heme b. At 294–317 (LRTRRRPATAAGRSVEDTASAPLK) the chain is on the cytoplasmic side.

The protein belongs to the COX15/CtaA family. Type 1 subfamily. As to quaternary structure, interacts with CtaB. Requires heme b as cofactor.

It is found in the cell membrane. The catalysed reaction is Fe(II)-heme o + 2 A + H2O = Fe(II)-heme a + 2 AH2. Its pathway is porphyrin-containing compound metabolism; heme A biosynthesis; heme A from heme O: step 1/1. Its function is as follows. Catalyzes the conversion of heme O to heme A by two successive hydroxylations of the methyl group at C8. The first hydroxylation forms heme I, the second hydroxylation results in an unstable dihydroxymethyl group, which spontaneously dehydrates, resulting in the formyl group of heme A. This is Heme A synthase from Geobacillus thermodenitrificans.